We begin with the raw amino-acid sequence, 385 residues long: Odorant receptor 47a (385 aa).

Residues 1-33 are Cytoplasmic-facing; it reads MDSFLQVQKSTIALLGFDLFSENREMWKRPYRA. A helical membrane pass occupies residues 34-54; that stretch reads MNVFSIAAIFPFILAAVLHNW. Residues 55-62 are Extracellular-facing; the sequence is KNVLLLAD. Residues 63–83 form a helical membrane-spanning segment; the sequence is AMVALLITILGLFKFSMILYL. The Cytoplasmic segment spans residues 84-129; it reads RRDFKRLIDKFRLLMSNEAEQGEEYAEILNAANKQDQRMCTLFRTC. The helical transmembrane segment at 130–150 threads the bilayer; sequence FLLAWALNSVLPLVRMGLSYW. The Extracellular segment spans residues 151–175; the sequence is LAGHAEPELPFPCLFPWNIHIIRNY. The chain crosses the membrane as a helical span at residues 176 to 196; the sequence is VLSFIWSAFASTGVVLPAVSL. Residues 197 to 255 are Cytoplasmic-facing; the sequence is DTIFCSFTSNLCAFFKIAQYKVVRFKGGSLKESQATLNKVFALYQTSLDMCNDLNQCYQ. Residues 256–276 form a helical membrane-spanning segment; it reads PIICAQFFISSLQLCMLGYLF. The Extracellular portion of the chain corresponds to 277-284; sequence SITFAQTE. Residues 285–305 traverse the membrane as a helical segment; the sequence is GVYYASFIATIIIQAYIYCYC. Topologically, residues 306–357 are cytoplasmic; the sequence is GENLKTESASFEWAIYDSPWHESLGAGGASTSICRSLLISMMRAHRGFRITG. The chain crosses the membrane as a helical span at residues 358–378; sequence YFFEANMEAFSSIVRTAMSYI. Residues 379–385 lie on the Extracellular side of the membrane; sequence TMLRSFS.

It belongs to the insect chemoreceptor superfamily. Heteromeric odorant receptor channel (TC 1.A.69) family. Or1a subfamily. In terms of assembly, interacts with Orco. Complexes exist early in the endomembrane system in olfactory sensory neurons (OSNs), coupling these complexes to the conserved ciliary trafficking pathway. As to expression, expressed with Orco in 40 olfactory receptor neurons in a broad area across the antenna, including both anterior and posterior faces. This expression pattern matches the distribution of the small sensilla basiconica. Expression in the antenna is observed late in antennal development at 93 hours APF.

The protein resides in the cell membrane. Odorant receptor which mediates acceptance or avoidance behavior, depending on its substrates. The odorant receptor repertoire encodes a large collection of odor stimuli that vary widely in identity, intensity, and duration. Complexes with Orco to form odorant-sensing units, providing sensitive and prolonged odorant signaling and calcium permeability. They are necessary and sufficient to promote functional reconstitution of odor-evoked signaling in sensory neurons that normally respond only to carbon dioxide. Involved in the behavioral responses to esters. Involved in the behavioral responses to pentyl acetate. The polypeptide is Odorant receptor 47a (Or47a) (Drosophila melanogaster (Fruit fly)).